The following is a 112-amino-acid chain: DNA-binding protein TGAM_1196 (112 aa).

Belongs to the PDCD5 family.

In Thermococcus gammatolerans (strain DSM 15229 / JCM 11827 / EJ3), this protein is DNA-binding protein TGAM_1196.